The sequence spans 145 residues: I-leader protein (145 aa).

It is found in the host cytoplasm. The protein localises to the host perinuclear region. This Human adenovirus C serotype 2 (HAdV-2) protein is I-leader protein.